Consider the following 181-residue polypeptide: Large ribosomal subunit protein uL5 (181 aa).

This sequence belongs to the universal ribosomal protein uL5 family. As to quaternary structure, part of the 50S ribosomal subunit; part of the 5S rRNA/L5/L18/L25 subcomplex. Contacts the 5S rRNA and the P site tRNA. Forms a bridge to the 30S subunit in the 70S ribosome.

In terms of biological role, this is one of the proteins that bind and probably mediate the attachment of the 5S RNA into the large ribosomal subunit, where it forms part of the central protuberance. In the 70S ribosome it contacts protein S13 of the 30S subunit (bridge B1b), connecting the 2 subunits; this bridge is implicated in subunit movement. Contacts the P site tRNA; the 5S rRNA and some of its associated proteins might help stabilize positioning of ribosome-bound tRNAs. This is Large ribosomal subunit protein uL5 from Desulforamulus reducens (strain ATCC BAA-1160 / DSM 100696 / MI-1) (Desulfotomaculum reducens).